The following is a 193-amino-acid chain: Putative manganese efflux pump MntP (193 aa).

Helical transmembrane passes span 3–23 (IFAVFLLAIALSMDAFAVAVV), 41–61 (AAFGFFQFAMPVIGWWLGVSV), 69–89 (DHWIAFVLLGWIGGKMALSGL), 107–127 (AGRNLVVLGVATSIDALAVGL), 130–150 (AILGTPIWADAAIIGIVCAVI), and 164–184 (LCALNGWAELAGGLTLLAIAC).

Belongs to the MntP (TC 9.B.29) family.

Its subcellular location is the cell inner membrane. In terms of biological role, probably functions as a manganese efflux pump. This is Putative manganese efflux pump MntP from Desulfovibrio desulfuricans (strain ATCC 27774 / DSM 6949 / MB).